The primary structure comprises 485 residues: Aspartyl/glutamyl-tRNA(Asn/Gln) amidotransferase subunit B (485 aa).

Belongs to the GatB/GatE family. GatB subfamily. In terms of assembly, heterotrimer of A, B and C subunits.

It catalyses the reaction L-glutamyl-tRNA(Gln) + L-glutamine + ATP + H2O = L-glutaminyl-tRNA(Gln) + L-glutamate + ADP + phosphate + H(+). It carries out the reaction L-aspartyl-tRNA(Asn) + L-glutamine + ATP + H2O = L-asparaginyl-tRNA(Asn) + L-glutamate + ADP + phosphate + 2 H(+). Its function is as follows. Allows the formation of correctly charged Asn-tRNA(Asn) or Gln-tRNA(Gln) through the transamidation of misacylated Asp-tRNA(Asn) or Glu-tRNA(Gln) in organisms which lack either or both of asparaginyl-tRNA or glutaminyl-tRNA synthetases. The reaction takes place in the presence of glutamine and ATP through an activated phospho-Asp-tRNA(Asn) or phospho-Glu-tRNA(Gln). This Anaplasma marginale (strain Florida) protein is Aspartyl/glutamyl-tRNA(Asn/Gln) amidotransferase subunit B.